The sequence spans 1165 residues: DNA-directed RNA polymerase III subunit RPC2 (1165 aa).

The segment at M1–I21 is disordered. Positions 1111, 1114, 1123, and 1126 each coordinate Zn(2+). The C4-type zinc-finger motif lies at C1111–C1126.

This sequence belongs to the RNA polymerase beta chain family. In terms of assembly, component of the RNA polymerase III (Pol III) complex consisting of 17 subunits.

The protein resides in the nucleus. The enzyme catalyses RNA(n) + a ribonucleoside 5'-triphosphate = RNA(n+1) + diphosphate. Functionally, DNA-dependent RNA polymerase catalyzes the transcription of DNA into RNA using the four ribonucleoside triphosphates as substrates. Second largest core component of RNA polymerase III which synthesizes small RNAs, such as 5S rRNA and tRNAs. Proposed to contribute to the polymerase catalytic activity and forms the polymerase active center together with the largest subunit. Pol III is composed of mobile elements and RPC2 is part of the core element with the central large cleft and probably a clamp element that moves to open and close the cleft. The chain is DNA-directed RNA polymerase III subunit RPC2 (rpc2) from Schizosaccharomyces pombe (strain 972 / ATCC 24843) (Fission yeast).